The chain runs to 693 residues: Bacterial dynamin-like protein (693 aa).

The Cytoplasmic segment spans residues 1-521 (MVNQVATDRF…DNSPGWAKWA (521 aa)). The 248-residue stretch at 66-313 (QQGVFRLLVL…QADLDGTGFP (248 aa)) folds into the Dynamin-type G domain. The segment at 76 to 83 (GDMKRGKS) is G1 motif. 79-84 (KRGKST) contributes to the GTP binding site. Residues 102 to 103 (CT) are G2 motif. Residues 180–183 (DSPG) form a G3 motif region. 235-241 (FLVNAWD) is a binding site for GTP. Residues 238–241 (NAWD) form a G4 motif region. Position 268 (asparagine 268) is a region of interest, G5 motif. 292–293 (SI) lines the GTP pocket. Positions 311 to 571 (GFPKFMDSLN…TAVTGILLGP (261 aa)) are middle domain. A coiled-coil region spans residues 347 to 378 (REAVARRIPLLEQDVNELKKRIDSVEPEFNKL). Residues 522–574 (MGLLSLSKGNLAGFALAGAGFDWKNILLNYFTVIGIGGIITAVTGILLGPIGF) lie within the membrane without spanning it. The tract at residues 572–606 (IGFALLGLGVGFLQADQARRELVKTAKKELVKHLP) is paddle domain. The Cytoplasmic portion of the chain corresponds to 575–693 (ALLGLGVGFL…AYSNLLAYYS (119 aa)). Residues 607-693 (QVAHEQSQVV…AYSNLLAYYS (87 aa)) are GED. A coiled-coil region spans residues 661-688 (ESEFNRLKNLQEDVIAQLQKIEAAYSNL).

Belongs to the TRAFAC class dynamin-like GTPase superfamily. Dynamin/Fzo/YdjA family. Mitofusin subfamily. As to quaternary structure, homodimer. Self-assembles in the presence of GMP-PNP and liposomes, and probably also in the presence of GTP.

It localises to the cell inner membrane. The catalysed reaction is GTP + H2O = GDP + phosphate + H(+). Its function is as follows. Dynamin-related GTPase probably involved in membrane remodeling. Lipid and nucleotide-binding are thought to induce a large intramolecular rearrangement, leading to assembly on lipid bilayers and possible membrane curving. In the presence of the non-hydrolyzable GTP analog GMP-PNP self-assembles on a lipid bilayer; this does not stimulate subsequent GTPase activity. Does not bind lipids in the presence of GDP; perhaps GTP hydrolysis disrupts membrane-binding. This Nostoc punctiforme (strain ATCC 29133 / PCC 73102) protein is Bacterial dynamin-like protein.